The primary structure comprises 139 residues: MAKFLIVEARFYDHLNDMLVAGAKAALKEAGHEVEVITVPGALEIPGAIALADQSEDYDGYVAIGVVIRGETYHFEIVAGESARGIMALTMDGVAIGNGILTVENEAQALVRADPKQKDKGGEAAKAALALLALRERWS.

5-amino-6-(D-ribitylamino)uracil-binding positions include phenylalanine 11, 42–44 (ALE), and 66–68 (VVI). Position 71 to 72 (71 to 72 (ET)) interacts with (2S)-2-hydroxy-3-oxobutyl phosphate. Histidine 74 (proton donor) is an active-site residue. 5-amino-6-(D-ribitylamino)uracil is bound at residue asparagine 98. Arginine 112 is a binding site for (2S)-2-hydroxy-3-oxobutyl phosphate.

Belongs to the DMRL synthase family.

It catalyses the reaction (2S)-2-hydroxy-3-oxobutyl phosphate + 5-amino-6-(D-ribitylamino)uracil = 6,7-dimethyl-8-(1-D-ribityl)lumazine + phosphate + 2 H2O + H(+). The protein operates within cofactor biosynthesis; riboflavin biosynthesis; riboflavin from 2-hydroxy-3-oxobutyl phosphate and 5-amino-6-(D-ribitylamino)uracil: step 1/2. Its function is as follows. Catalyzes the formation of 6,7-dimethyl-8-ribityllumazine by condensation of 5-amino-6-(D-ribitylamino)uracil with 3,4-dihydroxy-2-butanone 4-phosphate. This is the penultimate step in the biosynthesis of riboflavin. The sequence is that of 6,7-dimethyl-8-ribityllumazine synthase from Novosphingobium aromaticivorans (strain ATCC 700278 / DSM 12444 / CCUG 56034 / CIP 105152 / NBRC 16084 / F199).